The chain runs to 382 residues: Quinolinate synthase (382 aa).

Residues histidine 63 and serine 84 each coordinate iminosuccinate. Cysteine 129 is a [4Fe-4S] cluster binding site. Residues 155 to 157 (YAN) and serine 172 each bind iminosuccinate. Cysteine 216 contributes to the [4Fe-4S] cluster binding site. Residues 242–244 (HPE) and threonine 259 each bind iminosuccinate. Cysteine 313 is a binding site for [4Fe-4S] cluster.

The protein belongs to the quinolinate synthase family. Type 1 subfamily. [4Fe-4S] cluster serves as cofactor.

It localises to the cytoplasm. It catalyses the reaction iminosuccinate + dihydroxyacetone phosphate = quinolinate + phosphate + 2 H2O + H(+). The protein operates within cofactor biosynthesis; NAD(+) biosynthesis; quinolinate from iminoaspartate: step 1/1. Functionally, catalyzes the condensation of iminoaspartate with dihydroxyacetone phosphate to form quinolinate. The sequence is that of Quinolinate synthase from Ralstonia pickettii (strain 12J).